Reading from the N-terminus, the 390-residue chain is Lissencephaly-1 homolog (390 aa).

Positions 7–39 constitute a LisH domain; sequence QREEINRAVAEYLQNNGYSEAFNMLLKEASLSE. Positions 54-80 form a coiled coil; the sequence is TTVLRLQRKVNDLEAKLLESQQEINHG. WD repeat units follow at residues 104–145, 146–185, 189–228, 231–270, 272–313, 316–355, and 358–390; these read GHRL…KTLK, GHTD…DCLK, GHEH…CVFT, GHND…RNWY, EIMS…VIFT, AHEN…CMKA, and AHEH…WECR.

It belongs to the WD repeat LIS1/nudF family.

It is found in the cytoplasm. Its subcellular location is the cytoskeleton. It localises to the microtubule organizing center. The protein localises to the centrosome. Its function is as follows. Positively regulates the activity of the minus-end directed microtubule motor protein dynein. May enhance dynein-mediated microtubule sliding by targeting dynein to the microtubule plus end. Required for several dynein- and microtubule-dependent processes. The protein is Lissencephaly-1 homolog of Caenorhabditis briggsae.